Here is a 271-residue protein sequence, read N- to C-terminus: Ribosomal RNA small subunit methyltransferase I (271 aa).

Belongs to the methyltransferase superfamily. RsmI family.

It localises to the cytoplasm. The enzyme catalyses cytidine(1402) in 16S rRNA + S-adenosyl-L-methionine = 2'-O-methylcytidine(1402) in 16S rRNA + S-adenosyl-L-homocysteine + H(+). In terms of biological role, catalyzes the 2'-O-methylation of the ribose of cytidine 1402 (C1402) in 16S rRNA. In Campylobacter fetus subsp. fetus (strain 82-40), this protein is Ribosomal RNA small subunit methyltransferase I.